Here is a 342-residue protein sequence, read N- to C-terminus: S-adenosylmethionine:tRNA ribosyltransferase-isomerase (342 aa).

The protein belongs to the QueA family. In terms of assembly, monomer.

The protein resides in the cytoplasm. The enzyme catalyses 7-aminomethyl-7-carbaguanosine(34) in tRNA + S-adenosyl-L-methionine = epoxyqueuosine(34) in tRNA + adenine + L-methionine + 2 H(+). It participates in tRNA modification; tRNA-queuosine biosynthesis. In terms of biological role, transfers and isomerizes the ribose moiety from AdoMet to the 7-aminomethyl group of 7-deazaguanine (preQ1-tRNA) to give epoxyqueuosine (oQ-tRNA). In Streptococcus pyogenes serotype M49 (strain NZ131), this protein is S-adenosylmethionine:tRNA ribosyltransferase-isomerase.